Reading from the N-terminus, the 304-residue chain is UDP-3-O-acyl-N-acetylglucosamine deacetylase (304 aa).

Zn(2+)-binding residues include His-78, His-237, and Asp-241. The active-site Proton donor is the His-264.

This sequence belongs to the LpxC family. Zn(2+) is required as a cofactor.

It carries out the reaction a UDP-3-O-[(3R)-3-hydroxyacyl]-N-acetyl-alpha-D-glucosamine + H2O = a UDP-3-O-[(3R)-3-hydroxyacyl]-alpha-D-glucosamine + acetate. The protein operates within glycolipid biosynthesis; lipid IV(A) biosynthesis; lipid IV(A) from (3R)-3-hydroxytetradecanoyl-[acyl-carrier-protein] and UDP-N-acetyl-alpha-D-glucosamine: step 2/6. Functionally, catalyzes the hydrolysis of UDP-3-O-myristoyl-N-acetylglucosamine to form UDP-3-O-myristoylglucosamine and acetate, the committed step in lipid A biosynthesis. In Polynucleobacter necessarius subsp. necessarius (strain STIR1), this protein is UDP-3-O-acyl-N-acetylglucosamine deacetylase.